The chain runs to 940 residues: Reticulon-3 (940 aa).

Low complexity predominate over residues 1 to 24 (MAESSAATQSPSVSSSSSGAEPST). 3 disordered regions span residues 1 to 32 (MAES…GGSP), 71 to 91 (SSEI…LGSH), and 129 to 182 (DIPC…ALDL). The residue at position 2 (A2) is an N-acetylalanine. Over 2–771 (AESSAATQSP…KKTGFVFGTT (770 aa)) the chain is Cytoplasmic. Residue S31 is modified to Phosphoserine. S196, S204, S209, S212, S249, and S282 each carry phosphoserine. 3 disordered regions span residues 314–335 (AKQQ…RSEH), 381–405 (KGYL…ISGS), and 428–512 (EVTE…LEGQ). The segment covering 430 to 447 (TEVDSSGESDDTVIEDTT) has biased composition (acidic residues). A compositionally biased stretch (basic and acidic residues) spans 472–490 (TSERENKETTSHETVRSEM). Over residues 491-512 (YENSEQQQAHAETPTQRSLEGQ) the composition is skewed to polar residues. S508 bears the Phosphoserine mark. Phosphothreonine is present on T572. A phosphoserine mark is found at S575, S576, and S652. 2 disordered regions span residues 623–655 (NKLS…SSDL) and 672–701 (QVQA…SDIL). The span at 689–699 (DPQSGPQNSSD) shows a compositional bias: polar residues. In terms of domain architecture, Reticulon spans 752-940 (VHDLIFWRDV…LPGIAKKKAE (189 aa)). The segment at residues 772–795 (LIMLLSLAAFSVISVVSYLILALL) is an intramembrane region (helical). Topologically, residues 796 to 852 (SVTISFRVYKSVIQAVQKSEEGHPFKAYLDVDITLSSEAFHSYMNAAMVHVNKALKL) are cytoplasmic. The segment at residues 853 to 875 (IIRLFLVEDLVDSLKLAVFMWLM) is an intramembrane region (helical). Residues 876-879 (TYVG) lie on the Cytoplasmic side of the membrane. Residues 880–902 (AVFNGITLLILAELLVFSVPIVY) constitute an intramembrane region (helical). The segment at 895–940 (VFSVPIVYEKYKTQIDHYVGIARDQTKSIVEKIQAKLPGIAKKKAE) is interaction with FADD. Residues 903–940 (EKYKTQIDHYVGIARDQTKSIVEKIQAKLPGIAKKKAE) lie on the Cytoplasmic side of the membrane. Residues 908 to 910 (QID) form an interaction with BACE1 region.

As to quaternary structure, homodimer. Interacts with RTN4. Isoform 2 interacts with BACE1, BACE2, BCL2 and FADD. Interacts with ATL2. Interacts with TMEM33. Interacts with ATL1. Interacts with ZFYVE27 and with KIF5A in a ZFYVE27-dependent manner. Interacts with RIGI. Interacts with TRIM25. As to expression, present in olfactory bulb, olfactory epithelium and retina (at protein level).

It is found in the endoplasmic reticulum membrane. The protein resides in the golgi apparatus membrane. Functionally, may be involved in membrane trafficking in the early secretory pathway. Inhibits BACE1 activity and amyloid precursor protein processing. May induce caspase-8 cascade and apoptosis. May favor BCL2 translocation to the mitochondria upon endoplasmic reticulum stress. Induces the formation of endoplasmic reticulum tubules. Acts also as an inflammation-resolving regulator by interacting with both TRIM25 and RIGI, subsequently impairing RIGI 'Lys-63'-linked polyubiquitination leading to IRF3 and NF-kappa-B inhibition. This is Reticulon-3 (Rtn3) from Rattus norvegicus (Rat).